The primary structure comprises 543 residues: Chaperonin GroEL (543 aa).

Residues T29–P32, D86–T90, G413, D477–L479, and D493 contribute to the ATP site.

Belongs to the chaperonin (HSP60) family. Forms a cylinder of 14 subunits composed of two heptameric rings stacked back-to-back. Interacts with the co-chaperonin GroES.

It is found in the cytoplasm. The catalysed reaction is ATP + H2O + a folded polypeptide = ADP + phosphate + an unfolded polypeptide.. Together with its co-chaperonin GroES, plays an essential role in assisting protein folding. The GroEL-GroES system forms a nano-cage that allows encapsulation of the non-native substrate proteins and provides a physical environment optimized to promote and accelerate protein folding. In Clostridium botulinum, this protein is Chaperonin GroEL.